Reading from the N-terminus, the 66-residue chain is Putative alpha-neurotoxin RjAa16 (66 aa).

An LCN-type CS-alpha/beta domain is found at 1-60; the sequence is KEGYPVDWGNCKYECMSDAYCKDLCVDRKAKSGYCYKLNWFCYCEGLPDDSPIKTNGHCR. 4 cysteine pairs are disulfide-bonded: Cys-11/Cys-59, Cys-15/Cys-35, Cys-21/Cys-42, and Cys-25/Cys-44.

This sequence belongs to the long (4 C-C) scorpion toxin superfamily. Sodium channel inhibitor family. Alpha subfamily. Expressed by the venom gland.

Its subcellular location is the secreted. Alpha toxins bind voltage-independently at site-3 of sodium channels (Nav) and inhibits the inactivation of the activated channels, thereby blocking neuronal transmission. This Rhopalurus junceus (Caribbean blue scorpion) protein is Putative alpha-neurotoxin RjAa16.